The sequence spans 376 residues: Alcohol dehydrogenase class-3 (376 aa).

C40, H62, C92, C95, C98, C106, and C170 together coordinate Zn(2+).

The protein belongs to the zinc-containing alcohol dehydrogenase family. Class-III subfamily. Homodimer. Requires Zn(2+) as cofactor.

Its subcellular location is the cytoplasm. It catalyses the reaction a primary alcohol + NAD(+) = an aldehyde + NADH + H(+). It carries out the reaction a secondary alcohol + NAD(+) = a ketone + NADH + H(+). The enzyme catalyses S-(hydroxymethyl)glutathione + NADP(+) = S-formylglutathione + NADPH + H(+). The catalysed reaction is S-(hydroxymethyl)glutathione + NAD(+) = S-formylglutathione + NADH + H(+). Functionally, oxidizes long-chain aliphatic alcohols, long-chain hydroxylated fatty acids and S-hydroxymethylglutathione (hmGSH) in increasing order of preference. Shows little or no activity with short-chain aliphatic alcohols. This chain is Alcohol dehydrogenase class-3 (adhI), found in Cereibacter sphaeroides (strain ATCC 17023 / DSM 158 / JCM 6121 / CCUG 31486 / LMG 2827 / NBRC 12203 / NCIMB 8253 / ATH 2.4.1.) (Rhodobacter sphaeroides).